We begin with the raw amino-acid sequence, 427 residues long: Lupus La protein homolog B (427 aa).

An HTH La-type RNA-binding domain is found at 6–98 (DKEQLDLDTK…RRSPAKPLPE (93 aa)). Residues 110–202 (RSVYIKGFPT…EERKLNKSEE (93 aa)) form the RRM domain. Disordered stretches follow at residues 193–220 (EERKLNKSEEKAKSKQEKEEAQKQAEDA) and 319–427 (EGKQ…VGDQ). The region spanning 226–348 (EERVGCLLKF…KGRGGKGNDS (123 aa)) is the xRRM domain. A Nuclear localization signal motif is present at residues 315–331 (KKIMEGKQESFNKRKGR). Basic residues-rich tracts occupy residues 327–342 (KRKGRDGRKFKGKGRG) and 351–360 (RKKIQFQGKK). Positions 365 to 376 (SSDDEDDMEESE) are enriched in acidic residues. Basic and acidic residues predominate over residues 405 to 427 (RALDDKAEDGPAVKQSKTEVGDQ).

Phosphorylated.

The protein localises to the nucleus. In terms of biological role, la protein plays a role in the transcription of RNA polymerase III. It is most probably a transcription termination factor. Binds to the 3' termini of virtually all nascent polymerase III transcripts. This Xenopus laevis (African clawed frog) protein is Lupus La protein homolog B (ssb-b).